Here is a 351-residue protein sequence, read N- to C-terminus: N-acetyl-gamma-glutamyl-phosphate reductase (351 aa).

The active site involves Cys-150.

The protein belongs to the NAGSA dehydrogenase family. Type 1 subfamily.

It localises to the cytoplasm. The catalysed reaction is N-acetyl-L-glutamate 5-semialdehyde + phosphate + NADP(+) = N-acetyl-L-glutamyl 5-phosphate + NADPH + H(+). Its pathway is amino-acid biosynthesis; L-arginine biosynthesis; N(2)-acetyl-L-ornithine from L-glutamate: step 3/4. Catalyzes the NADPH-dependent reduction of N-acetyl-5-glutamyl phosphate to yield N-acetyl-L-glutamate 5-semialdehyde. The chain is N-acetyl-gamma-glutamyl-phosphate reductase from Heliobacterium modesticaldum (strain ATCC 51547 / Ice1).